Reading from the N-terminus, the 123-residue chain is ATP synthase epsilon chain (123 aa).

The disordered stretch occupies residues 96 to 123 (ESRKQSAETEHDKAVAESELRAVKRMEA).

This sequence belongs to the ATPase epsilon chain family. F-type ATPases have 2 components, CF(1) - the catalytic core - and CF(0) - the membrane proton channel. CF(1) has five subunits: alpha(3), beta(3), gamma(1), delta(1), epsilon(1). CF(0) has three main subunits: a, b and c.

It is found in the cell membrane. Its function is as follows. Produces ATP from ADP in the presence of a proton gradient across the membrane. The sequence is that of ATP synthase epsilon chain from Corynebacterium jeikeium (strain K411).